The primary structure comprises 428 residues: Gamma-glutamyl phosphate reductase (428 aa).

Belongs to the gamma-glutamyl phosphate reductase family.

It localises to the cytoplasm. It carries out the reaction L-glutamate 5-semialdehyde + phosphate + NADP(+) = L-glutamyl 5-phosphate + NADPH + H(+). Its pathway is amino-acid biosynthesis; L-proline biosynthesis; L-glutamate 5-semialdehyde from L-glutamate: step 2/2. In terms of biological role, catalyzes the NADPH-dependent reduction of L-glutamate 5-phosphate into L-glutamate 5-semialdehyde and phosphate. The product spontaneously undergoes cyclization to form 1-pyrroline-5-carboxylate. This Picosynechococcus sp. (strain ATCC 27264 / PCC 7002 / PR-6) (Agmenellum quadruplicatum) protein is Gamma-glutamyl phosphate reductase.